The primary structure comprises 510 residues: Inositol-3-phosphate synthase 1 (510 aa).

Residues Gly-70, Gly-71, Asn-72, Asn-73, Asp-143, Ile-180, Gln-190, Arg-193, Thr-230, Ala-231, Asn-232, Thr-233, Gly-281, Ser-282, Asp-306, Ser-309, Asn-340, Asn-341, Asp-342, Lys-355, Gly-393, Asp-394, Asp-422, and Ser-423 each contribute to the NAD(+) site.

Belongs to the myo-inositol 1-phosphate synthase family. The cofactor is NAD(+).

It localises to the cytoplasm. It is found in the cytosol. The protein localises to the nucleus. The catalysed reaction is D-glucose 6-phosphate = 1D-myo-inositol 3-phosphate. The protein operates within polyol metabolism; myo-inositol biosynthesis; myo-inositol from D-glucose 6-phosphate: step 1/2. Its function is as follows. Key enzyme in myo-inositol biosynthesis pathway that catalyzes the conversion of glucose 6-phosphate to 1-myo-inositol 1-phosphate in a NAD-dependent manner. May play a role in oxidative stress resistance and influences ascorbate levels. The sequence is that of Inositol-3-phosphate synthase 1 from Populus euphratica (Euphrates poplar).